Consider the following 601-residue polypeptide: Putative pentatricopeptide repeat-containing protein At3g25060, mitochondrial (601 aa).

A mitochondrion-targeting transit peptide spans 1 to 80 (MVQTKHFCML…KVFDELPQRG (80 aa)). 13 PPR repeats span residues 49–79 (GSSI…LPQR), 80–114 (GVSV…KIQP), 115–149 (DSST…GYKN), 150–180 (DVFV…MAKR), 181–215 (DVIC…GFGR), 216–250 (DRVV…GLPM), 251–281 (NVVV…MMFK), 282–316 (TAVS…GFQP), 317–347 (DLVT…ILKR), 351–381 (DRVT…VGRK), 382–416 (DLVC…NIEP), 417–452 (DHAT…KIQP), and 453–487 (SEKH…NALP). The type E motif stretch occupies residues 488–563 (IWVALLSGCI…VPGYSAIEVN (76 aa)). A type E(+) motif region spans residues 564–594 (GELRTFLMEDLSHHEHYHMLQVLRNLKTEIR).

This sequence belongs to the PPR family. PCMP-E subfamily.

The protein localises to the mitochondrion. This Arabidopsis thaliana (Mouse-ear cress) protein is Putative pentatricopeptide repeat-containing protein At3g25060, mitochondrial (PCMP-E96).